The following is a 147-amino-acid chain: 3-dehydroquinate dehydratase (147 aa).

Residue Tyr-24 is the Proton acceptor of the active site. Residues Asn-75, His-81, and Asp-88 each contribute to the substrate site. The Proton donor role is filled by His-101. Substrate contacts are provided by residues 102-103 (IS) and Arg-112.

The protein belongs to the type-II 3-dehydroquinase family. Homododecamer.

It catalyses the reaction 3-dehydroquinate = 3-dehydroshikimate + H2O. Its pathway is metabolic intermediate biosynthesis; chorismate biosynthesis; chorismate from D-erythrose 4-phosphate and phosphoenolpyruvate: step 3/7. Its function is as follows. Catalyzes a trans-dehydration via an enolate intermediate. The sequence is that of 3-dehydroquinate dehydratase from Cereibacter sphaeroides (strain ATCC 17029 / ATH 2.4.9) (Rhodobacter sphaeroides).